A 157-amino-acid polypeptide reads, in one-letter code: Crossover junction endodeoxyribonuclease RuvC (157 aa).

Active-site residues include D7, E67, and D140. The Mg(2+) site is built by D7, E67, and D140.

This sequence belongs to the RuvC family. In terms of assembly, homodimer which binds Holliday junction (HJ) DNA. The HJ becomes 2-fold symmetrical on binding to RuvC with unstacked arms; it has a different conformation from HJ DNA in complex with RuvA. In the full resolvosome a probable DNA-RuvA(4)-RuvB(12)-RuvC(2) complex forms which resolves the HJ. The cofactor is Mg(2+).

Its subcellular location is the cytoplasm. It carries out the reaction Endonucleolytic cleavage at a junction such as a reciprocal single-stranded crossover between two homologous DNA duplexes (Holliday junction).. Functionally, the RuvA-RuvB-RuvC complex processes Holliday junction (HJ) DNA during genetic recombination and DNA repair. Endonuclease that resolves HJ intermediates. Cleaves cruciform DNA by making single-stranded nicks across the HJ at symmetrical positions within the homologous arms, yielding a 5'-phosphate and a 3'-hydroxyl group; requires a central core of homology in the junction. The consensus cleavage sequence is 5'-(A/T)TT(C/G)-3'. Cleavage occurs on the 3'-side of the TT dinucleotide at the point of strand exchange. HJ branch migration catalyzed by RuvA-RuvB allows RuvC to scan DNA until it finds its consensus sequence, where it cleaves and resolves the cruciform DNA. The polypeptide is Crossover junction endodeoxyribonuclease RuvC (Rickettsia bellii (strain OSU 85-389)).